The primary structure comprises 415 residues: Histidine--tRNA ligase (415 aa).

It belongs to the class-II aminoacyl-tRNA synthetase family. In terms of assembly, homodimer.

Its subcellular location is the cytoplasm. The catalysed reaction is tRNA(His) + L-histidine + ATP = L-histidyl-tRNA(His) + AMP + diphosphate + H(+). This chain is Histidine--tRNA ligase, found in Phytoplasma australiense.